The following is a 503-amino-acid chain: AMP phosphorylase (503 aa).

AMP-binding positions include glycine 168, 194–199 (SRAITS), and threonine 203. Aspartate 256 (proton donor) is an active-site residue. AMP-binding residues include serine 264 and lysine 288.

It belongs to the thymidine/pyrimidine-nucleoside phosphorylase family. Type 2 subfamily.

The enzyme catalyses AMP + phosphate = alpha-D-ribose 1,5-bisphosphate + adenine. It carries out the reaction CMP + phosphate = cytosine + alpha-D-ribose 1,5-bisphosphate. It catalyses the reaction UMP + phosphate = alpha-D-ribose 1,5-bisphosphate + uracil. In terms of biological role, catalyzes the conversion of AMP and phosphate to adenine and ribose 1,5-bisphosphate (R15P). Exhibits phosphorylase activity toward CMP and UMP in addition to AMP. Functions in an archaeal AMP degradation pathway, together with R15P isomerase and RubisCO. The sequence is that of AMP phosphorylase from Methanocaldococcus jannaschii (strain ATCC 43067 / DSM 2661 / JAL-1 / JCM 10045 / NBRC 100440) (Methanococcus jannaschii).